Reading from the N-terminus, the 127-residue chain is uncharacterized protein (127 aa).

One can recognise a VOC domain in the interval 1–127 (MKIVVTSIFV…CGNLIQIVQK (127 aa)).

This sequence belongs to the glyoxalase I family.

This is an uncharacterized protein from Bacillus subtilis (strain 168).